We begin with the raw amino-acid sequence, 576 residues long: Proline--tRNA ligase (576 aa).

The protein belongs to the class-II aminoacyl-tRNA synthetase family. ProS type 1 subfamily. In terms of assembly, homodimer.

It is found in the cytoplasm. The enzyme catalyses tRNA(Pro) + L-proline + ATP = L-prolyl-tRNA(Pro) + AMP + diphosphate. Its function is as follows. Catalyzes the attachment of proline to tRNA(Pro) in a two-step reaction: proline is first activated by ATP to form Pro-AMP and then transferred to the acceptor end of tRNA(Pro). As ProRS can inadvertently accommodate and process non-cognate amino acids such as alanine and cysteine, to avoid such errors it has two additional distinct editing activities against alanine. One activity is designated as 'pretransfer' editing and involves the tRNA(Pro)-independent hydrolysis of activated Ala-AMP. The other activity is designated 'posttransfer' editing and involves deacylation of mischarged Ala-tRNA(Pro). The misacylated Cys-tRNA(Pro) is not edited by ProRS. This is Proline--tRNA ligase from Leptospira borgpetersenii serovar Hardjo-bovis (strain JB197).